Here is a 962-residue protein sequence, read N- to C-terminus: UPF0182 protein SACE_1102 (962 aa).

The next 7 helical transmembrane spans lie at 10–30 (ILLILGGVVLIALIAGSRLLG), 55–75 (LGLGVAAGAFVGVVLLLNLWI), 106–126 (LFGWGIPIVIAVIAGLTAQSD), 168–188 (FVAITVGFIGALVTHYIFGGI), 203–223 (IQLSVLAGLFVLLKAVDYFLD), 250–270 (VKLILMIIAVFCALAFFAAIF), and 279–299 (IATVLLVLSSILVGSVWPALL). Disordered stretches follow at residues 707 to 730 (RTFWEVPPDPTSSGQGGSNQGNQQ) and 876 to 916 (FGPG…EMTK). Positions 899 to 910 (GQQPPTQQPPAG) are enriched in pro residues.

Belongs to the UPF0182 family.

The protein resides in the cell membrane. This chain is UPF0182 protein SACE_1102, found in Saccharopolyspora erythraea (strain ATCC 11635 / DSM 40517 / JCM 4748 / NBRC 13426 / NCIMB 8594 / NRRL 2338).